The sequence spans 477 residues: Cysteine--tRNA ligase (477 aa).

Cys-30 is a Zn(2+) binding site. The 'HIGH' region signature appears at 32–42 (PTVYDYNHIGH). Residues Cys-209, His-234, and Glu-238 each contribute to the Zn(2+) site. Residues 267 to 271 (KMSKS) carry the 'KMSKS' region motif. Lys-270 is a binding site for ATP.

The protein belongs to the class-I aminoacyl-tRNA synthetase family. Zn(2+) is required as a cofactor.

It localises to the cytoplasm. It carries out the reaction tRNA(Cys) + L-cysteine + ATP = L-cysteinyl-tRNA(Cys) + AMP + diphosphate. This chain is Cysteine--tRNA ligase, found in Staphylothermus marinus (strain ATCC 43588 / DSM 3639 / JCM 9404 / F1).